Reading from the N-terminus, the 224-residue chain is Phosphoglycolate phosphatase (224 aa).

Asp-11 acts as the Nucleophile in catalysis. Mg(2+) contacts are provided by Asp-11, Asp-13, and Asp-177.

Belongs to the HAD-like hydrolase superfamily. CbbY/CbbZ/Gph/YieH family. Mg(2+) serves as cofactor.

It carries out the reaction 2-phosphoglycolate + H2O = glycolate + phosphate. The protein operates within organic acid metabolism; glycolate biosynthesis; glycolate from 2-phosphoglycolate: step 1/1. Functionally, specifically catalyzes the dephosphorylation of 2-phosphoglycolate. Is involved in the dissimilation of the intracellular 2-phosphoglycolate formed during the DNA repair of 3'-phosphoglycolate ends, a major class of DNA lesions induced by oxidative stress. The chain is Phosphoglycolate phosphatase from Mannheimia succiniciproducens (strain KCTC 0769BP / MBEL55E).